A 389-amino-acid chain; its full sequence is Aspartic protease pepA (389 aa).

Positions 1-20 (MVLINQLGAVLAVCATLTVA) are cleaved as a signal peptide. Positions 21-67 (APTKGKARFNVPQVAIPKKMVHHPAVSYARALHKFGMKVPKTVQDAA) are cleaved as a propeptide — activation peptide. Positions 82 to 386 (YVTQVTVGEG…DTQGPRIGFA (305 aa)) constitute a Peptidase A1 domain. Aspartate 98 is a catalytic residue. An N-linked (GlcNAc...) asparagine glycan is attached at asparagine 257. The active site involves aspartate 279. A disulfide bond links cysteine 315 and cysteine 348.

It belongs to the peptidase A1 family. Monomer.

Its subcellular location is the secreted. Secreted aspartic endopeptidase that allows assimilation of proteinaceous substrates. The scissile peptide bond is attacked by a nucleophilic water molecule activated by two aspartic residues in the active site. Shows a broad primary substrate specificity. Favors hydrophobic residues at the P1 and P1' positions. The polypeptide is Aspartic protease pepA (Arthroderma otae (strain ATCC MYA-4605 / CBS 113480) (Microsporum canis)).